An 81-amino-acid polypeptide reads, in one-letter code: Elsinochrome C biosynthesis cluster protein SNOG_08613 (81 aa).

Functionally, part of the gene cluster that mediates the biosynthesis of elsinochrome C, a perelyenequinone phytotoxin structurally similar to cercosporin. The first step of elsinochrome C biosynthesis is performed by the polyketide synthase elcA which catalyzes the formation of nor-toralactone. The starter unit acyltransferase (SAT) domain of elcA initiates polyketide extension by the selective utilization of acetyl-CoA, which is elongated to the heptaketide in the beta-ketoacyl synthase (KS) domain by successive condensations with six malonyl units introduced by the malonyl acyltransferase (MAT) domain. The product template (PT) domain catalyzes C4-C9 and C2-C11 aldol cyclizations and dehydrations to a trihydroxynaphthalene, which is thought to be delivered to the thioesterase (TE) domain for product release. The bifunctional enzyme elcB then methylates nor-toralactone to toralactone before conducting an unusual oxidative aromatic ring opening. The next step in perylenequinone biosynthesis is an O-methylation at the nascent OH-6 of the elcB product performed by the O-methyltransferase elcD. The oxidative coupling of the two monomeric naphthol units in perylenequinone biosynthesis is catalyzed by the FAD-dependent monooxygenase elcE and the multicopper oxidase elcG. ElcG might catalyze the first intermolecular coupling in a regio- and stereo-selective manner via a phenol radical coupling mechanism and the elcE could forge the second C-C bond intramolecularly via a hydride transfer mechanism. The fasciclin domain-containing protein elcF might also play a role duting this step. The last piece of the puzzle in the biosynthesis of elsinochrome C is the additional annulation by enolate coupling to afford the dihydrobenzo(ghi)perylenequinone system, catalyzed by the FAD-dependent monooxygenase elcH. The polypeptide is Elsinochrome C biosynthesis cluster protein SNOG_08613 (Phaeosphaeria nodorum (strain SN15 / ATCC MYA-4574 / FGSC 10173) (Glume blotch fungus)).